We begin with the raw amino-acid sequence, 281 residues long: Pantothenate synthetase (281 aa).

Residue 30 to 37 participates in ATP binding; it reads MGALHRGH. Catalysis depends on His-37, which acts as the Proton donor. Gln-61 provides a ligand contact to (R)-pantoate. Gln-61 serves as a coordination point for beta-alanine. 147-150 contributes to the ATP binding site; it reads GEKD. Gln-153 serves as a coordination point for (R)-pantoate. ATP is bound by residues Ile-176 and 184 to 187; that span reads LSSR.

It belongs to the pantothenate synthetase family. Homodimer.

Its subcellular location is the cytoplasm. The catalysed reaction is (R)-pantoate + beta-alanine + ATP = (R)-pantothenate + AMP + diphosphate + H(+). Its pathway is cofactor biosynthesis; (R)-pantothenate biosynthesis; (R)-pantothenate from (R)-pantoate and beta-alanine: step 1/1. Catalyzes the condensation of pantoate with beta-alanine in an ATP-dependent reaction via a pantoyl-adenylate intermediate. In Porphyromonas gingivalis (strain ATCC 33277 / DSM 20709 / CIP 103683 / JCM 12257 / NCTC 11834 / 2561), this protein is Pantothenate synthetase.